Reading from the N-terminus, the 284-residue chain is 2-dehydro-3-deoxyphosphooctonate aldolase (284 aa).

The protein belongs to the KdsA family.

The protein localises to the cytoplasm. The catalysed reaction is D-arabinose 5-phosphate + phosphoenolpyruvate + H2O = 3-deoxy-alpha-D-manno-2-octulosonate-8-phosphate + phosphate. It functions in the pathway carbohydrate biosynthesis; 3-deoxy-D-manno-octulosonate biosynthesis; 3-deoxy-D-manno-octulosonate from D-ribulose 5-phosphate: step 2/3. The protein operates within bacterial outer membrane biogenesis; lipopolysaccharide biosynthesis. This Haemophilus influenzae (strain 86-028NP) protein is 2-dehydro-3-deoxyphosphooctonate aldolase.